The sequence spans 185 residues: Ribosome-recycling factor (185 aa).

Belongs to the RRF family.

It is found in the cytoplasm. In terms of biological role, responsible for the release of ribosomes from messenger RNA at the termination of protein biosynthesis. May increase the efficiency of translation by recycling ribosomes from one round of translation to another. The polypeptide is Ribosome-recycling factor (Mycobacteroides abscessus (strain ATCC 19977 / DSM 44196 / CCUG 20993 / CIP 104536 / JCM 13569 / NCTC 13031 / TMC 1543 / L948) (Mycobacterium abscessus)).